Reading from the N-terminus, the 512-residue chain is Probable DNA ligase (512 aa).

Position 208 (Glu-208) interacts with ATP. Lys-210 serves as the catalytic N6-AMP-lysine intermediate. The ATP site is built by Arg-215, Arg-230, Glu-259, Phe-299, Arg-374, and Lys-380.

This sequence belongs to the ATP-dependent DNA ligase family. Requires Mg(2+) as cofactor.

It catalyses the reaction ATP + (deoxyribonucleotide)n-3'-hydroxyl + 5'-phospho-(deoxyribonucleotide)m = (deoxyribonucleotide)n+m + AMP + diphosphate.. DNA ligase that seals nicks in double-stranded DNA during DNA replication, DNA recombination and DNA repair. The chain is Probable DNA ligase from Streptomyces avermitilis (strain ATCC 31267 / DSM 46492 / JCM 5070 / NBRC 14893 / NCIMB 12804 / NRRL 8165 / MA-4680).